We begin with the raw amino-acid sequence, 547 residues long: Probable acetolactate synthase (547 aa).

E57 is a binding site for thiamine diphosphate. Residues P159 and 299–318 (DRVE…LYGD) contribute to the FAD site. A thiamine pyrophosphate binding region spans residues 388-468 (DFGSYAGRMI…VVSVIGNNGI (81 aa)). D439 and N466 together coordinate Mg(2+).

This sequence belongs to the TPP enzyme family. Mg(2+) serves as cofactor. The cofactor is thiamine diphosphate.

The catalysed reaction is 2 pyruvate + H(+) = (2S)-2-acetolactate + CO2. It participates in amino-acid biosynthesis; L-isoleucine biosynthesis; L-isoleucine from 2-oxobutanoate: step 1/4. Its pathway is amino-acid biosynthesis; L-valine biosynthesis; L-valine from pyruvate: step 1/4. This chain is Probable acetolactate synthase (ilvG), found in Mycobacterium bovis (strain ATCC BAA-935 / AF2122/97).